A 264-amino-acid polypeptide reads, in one-letter code: Thiazole synthase (264 aa).

The active-site Schiff-base intermediate with DXP is the Lys98. Residues Gly159, 185–186 (AG), and 207–208 (AS) each bind 1-deoxy-D-xylulose 5-phosphate. The segment at 243 to 264 (HFAEASSPPEGRAHLDPERPAF) is disordered. Positions 253–264 (GRAHLDPERPAF) are enriched in basic and acidic residues.

The protein belongs to the ThiG family. In terms of assembly, homotetramer. Forms heterodimers with either ThiH or ThiS.

Its subcellular location is the cytoplasm. It catalyses the reaction [ThiS sulfur-carrier protein]-C-terminal-Gly-aminoethanethioate + 2-iminoacetate + 1-deoxy-D-xylulose 5-phosphate = [ThiS sulfur-carrier protein]-C-terminal Gly-Gly + 2-[(2R,5Z)-2-carboxy-4-methylthiazol-5(2H)-ylidene]ethyl phosphate + 2 H2O + H(+). The protein operates within cofactor biosynthesis; thiamine diphosphate biosynthesis. Catalyzes the rearrangement of 1-deoxy-D-xylulose 5-phosphate (DXP) to produce the thiazole phosphate moiety of thiamine. Sulfur is provided by the thiocarboxylate moiety of the carrier protein ThiS. In vitro, sulfur can be provided by H(2)S. This is Thiazole synthase from Streptomyces avermitilis (strain ATCC 31267 / DSM 46492 / JCM 5070 / NBRC 14893 / NCIMB 12804 / NRRL 8165 / MA-4680).